Consider the following 428-residue polypeptide: 3-phosphoshikimate 1-carboxyvinyltransferase (428 aa).

3-phosphoshikimate-binding residues include Lys22, Ser23, and Arg27. Lys22 provides a ligand contact to phosphoenolpyruvate. Residues Gly98 and Arg126 each coordinate phosphoenolpyruvate. Positions 172, 173, 174, 200, 316, 339, and 343 each coordinate 3-phosphoshikimate. Residue Gln174 participates in phosphoenolpyruvate binding. Asp316 serves as the catalytic Proton acceptor. Residues Arg347, Arg389, and Lys414 each coordinate phosphoenolpyruvate.

This sequence belongs to the EPSP synthase family. As to quaternary structure, monomer.

The protein resides in the cytoplasm. It catalyses the reaction 3-phosphoshikimate + phosphoenolpyruvate = 5-O-(1-carboxyvinyl)-3-phosphoshikimate + phosphate. It functions in the pathway metabolic intermediate biosynthesis; chorismate biosynthesis; chorismate from D-erythrose 4-phosphate and phosphoenolpyruvate: step 6/7. Catalyzes the transfer of the enolpyruvyl moiety of phosphoenolpyruvate (PEP) to the 5-hydroxyl of shikimate-3-phosphate (S3P) to produce enolpyruvyl shikimate-3-phosphate and inorganic phosphate. The protein is 3-phosphoshikimate 1-carboxyvinyltransferase of Psychromonas ingrahamii (strain DSM 17664 / CCUG 51855 / 37).